Consider the following 370-residue polypeptide: Quinolinate synthase (370 aa).

The iminosuccinate site is built by His62 and Ser83. Residue Cys128 coordinates [4Fe-4S] cluster. Iminosuccinate contacts are provided by residues 154–156 (YAN) and Ser171. Residue Cys215 coordinates [4Fe-4S] cluster. Iminosuccinate contacts are provided by residues 241–243 (HPE) and Thr258. Residue Cys312 coordinates [4Fe-4S] cluster.

Belongs to the quinolinate synthase family. Type 1 subfamily. [4Fe-4S] cluster is required as a cofactor.

Its subcellular location is the cytoplasm. It catalyses the reaction iminosuccinate + dihydroxyacetone phosphate = quinolinate + phosphate + 2 H2O + H(+). It participates in cofactor biosynthesis; NAD(+) biosynthesis; quinolinate from iminoaspartate: step 1/1. Its function is as follows. Catalyzes the condensation of iminoaspartate with dihydroxyacetone phosphate to form quinolinate. This Neisseria gonorrhoeae (strain ATCC 700825 / FA 1090) protein is Quinolinate synthase.